The primary structure comprises 412 residues: Tryptophan synthase beta chain 1 (412 aa).

Lys-103 carries the post-translational modification N6-(pyridoxal phosphate)lysine.

It belongs to the TrpB family. Tetramer of two alpha and two beta chains. It depends on pyridoxal 5'-phosphate as a cofactor.

The catalysed reaction is (1S,2R)-1-C-(indol-3-yl)glycerol 3-phosphate + L-serine = D-glyceraldehyde 3-phosphate + L-tryptophan + H2O. Its pathway is amino-acid biosynthesis; L-tryptophan biosynthesis; L-tryptophan from chorismate: step 5/5. The beta subunit is responsible for the synthesis of L-tryptophan from indole and L-serine. This Chlamydia caviae (strain ATCC VR-813 / DSM 19441 / 03DC25 / GPIC) (Chlamydophila caviae) protein is Tryptophan synthase beta chain 1 (trpB1).